Reading from the N-terminus, the 101-residue chain is MARLALINREEKRVKLAEKFSAKREALIATINNQNLSEEERFAARLQLQQLPRNASPVRQRRRCAVTGRPRGVFRKFGLGRNKLREIAMKGEIPGVVKASW.

The protein belongs to the universal ribosomal protein uS14 family. Part of the 30S ribosomal subunit. Contacts proteins S3 and S10.

In terms of biological role, binds 16S rRNA, required for the assembly of 30S particles and may also be responsible for determining the conformation of the 16S rRNA at the A site. The protein is Small ribosomal subunit protein uS14 of Chromobacterium violaceum (strain ATCC 12472 / DSM 30191 / JCM 1249 / CCUG 213 / NBRC 12614 / NCIMB 9131 / NCTC 9757 / MK).